A 284-amino-acid chain; its full sequence is MSSEYAKLVASLSNQDILTKWPEVTPLKKISGIPRSAGSDSSDSDLFDGHDEEQIRLMEELCIVLDYDDKPVGAGTKKLCHIMDNINAGLLHRAFSVFLFNEDGKLLLQQRADEKITFANMWTNTCCSHPLCVPSELGVDSSLEGSKDVNNLTNAVKGAKVAAQRKLEHELGIPFEDAPIENFTYLTRIHYKSPSGDESSKWGEHEIDYILILKTKNDITVNANYNEVRDFKYVSADELKVMFEDDSLVFTPWFKLICQSFLFKWWDNLDNLDQFKDEEIHRLL.

Residue Lys-77 coordinates substrate. Positions 81 and 92 each coordinate Mg(2+). Residues 90–256 (LLHRAFSVFL…SLVFTPWFKL (167 aa)) form the Nudix hydrolase domain. Positions 111 and 115 each coordinate substrate. The active site involves Cys-127. Residue Ser-128 coordinates substrate. The Nudix box signature appears at 128-172 (SHPLCVPSELGVDSSLEGSKDVNNLTNAVKGAKVAAQRKLEHELG). Residues Glu-204 and Glu-206 each contribute to the Mg(2+) site. The active site involves Glu-206.

This sequence belongs to the IPP isomerase type 1 family. Mg(2+) serves as cofactor.

It localises to the cytoplasm. It carries out the reaction isopentenyl diphosphate = dimethylallyl diphosphate. The protein operates within isoprenoid biosynthesis; dimethylallyl diphosphate biosynthesis; dimethylallyl diphosphate from isopentenyl diphosphate: step 1/1. Isopentenyl-diphosphate delta-isomerase; part of the second module of ergosterol biosynthesis pathway that includes the middle steps of the pathway. IDI1 catalyzes the 1,3-allylic rearrangement of isopentenyl (IPP) to its highly electrophilic allylic isomer, dimethylallyl diphosphate (DMAPP). The second module is carried out in the vacuole and involves the formation of farnesyl diphosphate, which is also an important intermediate in the biosynthesis of ubiquinone, dolichol, heme and prenylated proteins. Activity by the mevalonate kinase ERG12 first converts mevalonate into 5-phosphomevalonate. 5-phosphomevalonate is then further converted to 5-diphosphomevalonate by the phosphomevalonate kinase ERG8. The diphosphomevalonate decarboxylase MVD then produces isopentenyl diphosphate. The isopentenyl-diphosphate delta-isomerase IDI1 then catalyzes the 1,3-allylic rearrangement of the homoallylic substrate isopentenyl (IPP) to its highly electrophilic allylic isomer, dimethylallyl diphosphate (DMAPP). Finally the farnesyl diphosphate synthase ERG20 catalyzes the sequential condensation of isopentenyl pyrophosphate with dimethylallyl pyrophosphate, and then with the resultant geranylpyrophosphate to the ultimate product farnesyl pyrophosphate. The protein is Isopentenyl-diphosphate delta-isomerase of Candida albicans (strain SC5314 / ATCC MYA-2876) (Yeast).